A 127-amino-acid polypeptide reads, in one-letter code: Fatty acid-binding protein, liver (127 aa).

M1 bears the N-acetylmethionine mark. S11 bears the Phosphoserine mark. 2 positions are modified to N6-succinyllysine: K31 and K36. Phosphoserine is present on S39. An N6-succinyllysine modification is found at K46. A Phosphothreonine modification is found at T51. The residue at position 56 (S56) is a Phosphoserine. K57, K78, and K90 each carry N6-succinyllysine. Residue S100 is modified to Phosphoserine. K121 carries the post-translational modification N6-succinyllysine.

This sequence belongs to the calycin superfamily. Fatty-acid binding protein (FABP) family. Monomer.

Its subcellular location is the cytoplasm. Plays a role in lipoprotein-mediated cholesterol uptake in hepatocytes. Binds cholesterol. Binds free fatty acids and their coenzyme A derivatives, bilirubin, and some other small molecules in the cytoplasm. May be involved in intracellular lipid transport. The polypeptide is Fatty acid-binding protein, liver (FABP1) (Sus scrofa (Pig)).